A 442-amino-acid chain; its full sequence is Probable carboxypeptidase PABG_01461 (442 aa).

The N-terminal stretch at 1-20 (MKLQYLVALLSVQAVPPVTA) is a signal peptide. Residue N102 is glycosylated (N-linked (GlcNAc...) asparagine). Zn(2+) is bound at residue D160. E192 functions as the Proton acceptor in the catalytic mechanism. Residue E193 coordinates Zn(2+). N343 carries an N-linked (GlcNAc...) asparagine glycan.

The protein belongs to the peptidase M20A family. Requires Zn(2+) as cofactor.

Its subcellular location is the secreted. This Paracoccidioides brasiliensis (strain Pb03) protein is Probable carboxypeptidase PABG_01461.